A 541-amino-acid polypeptide reads, in one-letter code: 2-hydroxyacylsphingosine 1-beta-galactosyltransferase (541 aa).

The first 20 residues, 1–20 (MKSYTPYFILLWSAVGIAKA), serve as a signal peptide directing secretion. N-linked (GlcNAc...) asparagine glycosylation is found at asparagine 78, asparagine 333, and asparagine 442. A helical transmembrane segment spans residues 472 to 492 (YFLLDIAFVLLLGAALLYFLL).

It belongs to the UDP-glycosyltransferase family.

The protein resides in the membrane. The protein localises to the endoplasmic reticulum. The enzyme catalyses an N-acylsphing-4-enine + UDP-alpha-D-galactose = a beta-D-galactosyl-(1&lt;-&gt;1')-N-acylsphing-4-enine + UDP + H(+). It catalyses the reaction an N-acyl-sphingoid base + UDP-alpha-D-galactose = a D-galactosylceramide + UDP + H(+). The catalysed reaction is N-(2-hydroxy-hexanoyl)-sphing-4-enine + UDP-alpha-D-galactose = N-(2-hydroxy-hexanoyl)-beta-D-galactosyl-sphing-4-enine + UDP + H(+). It carries out the reaction N-(2-hydroxy-hexanoyl)-sphinganine + UDP-alpha-D-galactose = N-(2-hydroxyhexanoyl)-beta-D-galactosylsphinganine + UDP + H(+). It functions in the pathway sphingolipid metabolism; galactosylceramide biosynthesis. Catalyzes the transfer of galactose to ceramide, a key enzymatic step in the biosynthesis of galactocerebrosides, which are abundant sphingolipids of the myelin membrane of the central nervous system and peripheral nervous system. Galactosylates both hydroxy- and non-hydroxy fatty acid-containing ceramides and diglycerides. The polypeptide is 2-hydroxyacylsphingosine 1-beta-galactosyltransferase (Homo sapiens (Human)).